Here is a 160-residue protein sequence, read N- to C-terminus: Single-stranded DNA-binding protein 2 (160 aa).

The region spanning 2-104 is the SSB domain; sequence MNRVVLVGRL…VVAESVQFLE (103 aa). The tract at residues 107 to 160 is disordered; that stretch reads NNNVEGATSNNYQNKANYSNNNQTSSYRADTSQKSDSFASEGKPIDINEDDLPF. Low complexity predominate over residues 115 to 129; it reads SNNYQNKANYSNNNQ. Residues 130-144 show a composition bias toward polar residues; it reads TSSYRADTSQKSDSF. Residues 155 to 160 carry the Important for interaction with partner proteins motif; sequence EDDLPF.

As to quaternary structure, homotetramer.

Its function is as follows. Plays an important role in DNA replication, recombination and repair. Binds to ssDNA and to an array of partner proteins to recruit them to their sites of action during DNA metabolism. The chain is Single-stranded DNA-binding protein 2 (ssb2) from Listeria monocytogenes serovar 1/2a (strain ATCC BAA-679 / EGD-e).